Reading from the N-terminus, the 194-residue chain is Nucleoside triphosphate pyrophosphatase (194 aa).

Asp68 (proton acceptor) is an active-site residue.

Belongs to the Maf family. A divalent metal cation serves as cofactor.

The protein localises to the cytoplasm. The enzyme catalyses a ribonucleoside 5'-triphosphate + H2O = a ribonucleoside 5'-phosphate + diphosphate + H(+). It carries out the reaction a 2'-deoxyribonucleoside 5'-triphosphate + H2O = a 2'-deoxyribonucleoside 5'-phosphate + diphosphate + H(+). Nucleoside triphosphate pyrophosphatase. May have a dual role in cell division arrest and in preventing the incorporation of modified nucleotides into cellular nucleic acids. The polypeptide is Nucleoside triphosphate pyrophosphatase (Corynebacterium jeikeium (strain K411)).